The chain runs to 324 residues: Probable uridine nucleosidase 1 (324 aa).

Residue H248 is part of the active site.

Belongs to the IUNH family.

The protein resides in the cytoplasm. The catalysed reaction is uridine + H2O = D-ribose + uracil. In terms of biological role, involved in pyrimidine breakdown. The chain is Probable uridine nucleosidase 1 (URH1) from Oryza sativa subsp. japonica (Rice).